Here is a 151-residue protein sequence, read N- to C-terminus: UPF0735 ACT domain-containing protein SH1278 (151 aa).

An ACT domain is found at 74-149; that stretch reads TLILYVNDIV…HVSKVELISM (76 aa).

It belongs to the UPF0735 family.

This is UPF0735 ACT domain-containing protein SH1278 from Staphylococcus haemolyticus (strain JCSC1435).